A 70-amino-acid chain; its full sequence is MLVLSRKKNESIVINNDIKIVVVEIRGDKVRLGVEAPREVPVHRREVYDAIQRNNEAFDANAPADSNDVS.

It belongs to the CsrA/RsmA family. In terms of assembly, homodimer; the beta-strands of each monomer intercalate to form a hydrophobic core, while the alpha-helices form wings that extend away from the core.

The protein localises to the cytoplasm. A translational regulator that binds mRNA to regulate translation initiation and/or mRNA stability. Usually binds in the 5'-UTR at or near the Shine-Dalgarno sequence preventing ribosome-binding, thus repressing translation. Its main target seems to be the major flagellin gene, while its function is anatagonized by FliW. This chain is Translational regulator CsrA, found in Rhodopirellula baltica (strain DSM 10527 / NCIMB 13988 / SH1).